We begin with the raw amino-acid sequence, 492 residues long: Catalase isozyme 1 (492 aa).

Active-site residues include His-65 and Asn-138. Residue Tyr-348 coordinates heme.

Belongs to the catalase family. In terms of assembly, homotetramer. Heme serves as cofactor.

It is found in the peroxisome. It carries out the reaction 2 H2O2 = O2 + 2 H2O. Functionally, occurs in almost all aerobically respiring organisms and serves to protect cells from the toxic effects of hydrogen peroxide. The chain is Catalase isozyme 1 (CAT1) from Solanum lycopersicum (Tomato).